A 152-amino-acid chain; its full sequence is Succinate dehydrogenase [ubiquinone] cytochrome b small subunit A, mitochondrial (152 aa).

The transit peptide at 1–21 (MVTVLRLSSLCRANRASAFKS) directs the protein to the mitochondrion. The Mitochondrial matrix segment spans residues 22-56 (LLIRPVPCLSQDLHTVQTSQIHTSQNHHAASKAAS). The helical transmembrane segment at 57–78 (LHWTSERALSVALLGLLPAAYL) threads the bilayer. At 79–83 (YPGAA) the chain is on the mitochondrial intermembrane side. Residues 84–104 (VDYSLAAALTLHGHWGLGQVV) traverse the membrane as a helical segment. Histidine 95 contacts heme b. Residues 105–113 (TDYVHGDAK) lie on the Mitochondrial matrix side of the membrane. Tyrosine 107 contacts a ubiquinone. The chain crosses the membrane as a helical span at residues 114-135 (IKLANTSLFALSALTFAGLCYF). Residues 136 to 152 (NYHDVGICKAVAMLWSL) are Mitochondrial intermembrane-facing.

The protein belongs to the CybS family. Component of complex II composed of four subunits: the flavoprotein (FP) SDHA, iron-sulfur protein (IP) SDHB, and a cytochrome b560 composed of SDHC and SDHD.

It localises to the mitochondrion inner membrane. Its pathway is carbohydrate metabolism; tricarboxylic acid cycle. Functionally, membrane-anchoring subunit of succinate dehydrogenase (SDH) that is involved in complex II of the mitochondrial electron transport chain and is responsible for transferring electrons from succinate to ubiquinone (coenzyme Q). SDH also oxidizes malate to the non-canonical enol form of oxaloacetate, enol-oxaloacetate. Enol-oxaloacetate, which is a potent inhibitor of the succinate dehydrogenase activity, is further isomerized into keto-oxaloacetate. The sequence is that of Succinate dehydrogenase [ubiquinone] cytochrome b small subunit A, mitochondrial (sdhd-a) from Xenopus laevis (African clawed frog).